The primary structure comprises 174 residues: 3-hydroxydecanoyl-[acyl-carrier-protein] dehydratase (174 aa).

Histidine 71 is an active-site residue.

It belongs to the thioester dehydratase family. FabA subfamily. As to quaternary structure, homodimer.

It localises to the cytoplasm. The catalysed reaction is a (3R)-hydroxyacyl-[ACP] = a (2E)-enoyl-[ACP] + H2O. The enzyme catalyses (3R)-hydroxydecanoyl-[ACP] = (2E)-decenoyl-[ACP] + H2O. It catalyses the reaction (2E)-decenoyl-[ACP] = (3Z)-decenoyl-[ACP]. It participates in lipid metabolism; fatty acid biosynthesis. In terms of biological role, necessary for the introduction of cis unsaturation into fatty acids. Catalyzes the dehydration of (3R)-3-hydroxydecanoyl-ACP to E-(2)-decenoyl-ACP and then its isomerization to Z-(3)-decenoyl-ACP. Can catalyze the dehydratase reaction for beta-hydroxyacyl-ACPs with saturated chain lengths up to 16:0, being most active on intermediate chain length. This Nitrobacter winogradskyi (strain ATCC 25391 / DSM 10237 / CIP 104748 / NCIMB 11846 / Nb-255) protein is 3-hydroxydecanoyl-[acyl-carrier-protein] dehydratase.